Reading from the N-terminus, the 2055-residue chain is Protein PHOTOPERIOD-INDEPENDENT EARLY FLOWERING 1 (2055 aa).

The tract at residues 1-47 is disordered; the sequence is MASKGGKSKPDIVMASKSGKSKPDNESRAKRQKTLEAPKEPRRPKTH. Positions 21-47 are enriched in basic and acidic residues; the sequence is SKPDNESRAKRQKTLEAPKEPRRPKTH. Residues 29 to 36 carry the Nuclear localization signal 1 motif; the sequence is AKRQKTLE. Residues 35–107 enclose the HSA domain; that stretch reads LEAPKEPRRP…EEQRLRKVAL (73 aa). 2 coiled-coil regions span residues 78-147 and 229-250; these read LRAS…LEFL and EEDE…LQNE. Disordered stretches follow at residues 183–332 and 340–359; these read KSDE…SNDS and ETHS…KSRK. Over residues 208-230 the composition is skewed to acidic residues; that stretch reads ELDEDYDLKSEDETEDDEDTIEE. Composition is skewed to basic and acidic residues over residues 231 to 243 and 267 to 276; these read DEKH…RQEE and VSRETSPVKD. Residues 392 to 416 adopt a coiled-coil conformation; sequence EEELAKADNEDHVEEIALLQKESEM. Residues 432-461 form a disordered region; it reads KDISEDESESSFAVSEDSIVDSDENRQQAD. Residues 548-713 enclose the Helicase ATP-binding domain; the sequence is VTMYEKKLNG…WSLMHFLMPH (166 aa). Residue 561-568 coordinates ATP; the sequence is DEMGLGKT. A DEAH box motif is present at residues 664-667; sequence DEAH. Residues 1076–1229 form the Helicase C-terminal domain; the sequence is KLQELAMLLR…NLVIQNGEYN (154 aa). The segment at 1293 to 1313 is disordered; sequence EEAVDNQEFTEEPVERPEDDE. The stretch at 1419–1492 forms a coiled coil; sequence FEEKEWELDH…EREAAEVAEM (74 aa). Short sequence motifs (nuclear localization signal) lie at residues 1506 to 1513 and 1570 to 1577; these read KKKKKAKK and KKRDLIVD. The interval 1577–1597 is disordered; it reads DTDEEKTSKKKAKKHKKSLPN. Basic residues predominate over residues 1584 to 1594; sequence SKKKAKKHKKS. Positions 1673–1727 constitute a Myb-like domain; that stretch reads SWLPQEDAILCAMVHEYGPNWNFVSGTLYGMTAGGAYRGRYRHPAYCCERYRELI. 2 disordered regions span residues 1843–1864 and 1951–1977; these read ALQD…LQET and KSRT…STKS. Positions 1844–1864 are enriched in polar residues; it reads LQDSGPSQPDNTISRSRLQET. A coiled-coil region spans residues 2006–2029; that stretch reads GDREEEEEQEVDEKANSAEIEMIS.

The protein belongs to the SNF2/RAD54 helicase family. SWR1 subfamily. In terms of assembly, component of the SWR1 chromatin-remodeling complex composed of at least ARP6/ESD1/SUF3, PIE1, SWC6, SWC2 and H2AZs (HTA8, HTA9, HTA11). Interacts (via c-terminus) with SWC6 and ARP6 and (via N-terminus) with H2AZs. In terms of tissue distribution, expressed in ovules, but not in stamens.

The protein resides in the nucleus. It catalyses the reaction ATP + H2O = ADP + phosphate + H(+). Functionally, component of the SWR1 complex which mediates the ATP-dependent exchange of histone H2A for the H2A variant H2A.F/Z leading to transcriptional regulation of selected genes (e.g. FLC) by chromatin remodeling. Probable DNA-dependent ATPase. Not involved in the repression of FLC in gametophytes, but required for the reactivation of FLC in early embryos and for the maintenance of full activation of FLC in late embryos. This chain is Protein PHOTOPERIOD-INDEPENDENT EARLY FLOWERING 1 (PIE1), found in Arabidopsis thaliana (Mouse-ear cress).